The sequence spans 473 residues: Benzoyl-CoA oxygenase component B (473 aa).

Belongs to the benzoyl-CoA oxygenase component B family. In terms of assembly, monomer. The subunit composition of the active BoxA/BoxB protein complex is not known. Fe cation is required as a cofactor.

The enzyme catalyses benzoyl-CoA + NADPH + O2 + H(+) = 2,3-epoxy-2,3-dihydrobenzoyl-CoA + NADP(+) + H2O. In terms of biological role, the BoxA/BoxB complex catalyzes the aerobic reduction/oxygenation of the aromatic ring of benzoyl-CoA to form 2,3-epoxy-2,3-dihydrobenzoyl-CoA. BoxB acts as the benzoyl-CoA oxygenase, after being reduced by the reductase component BoxA. BoxAB does not act on NADH or benzoate. This Aromatoleum evansii (Azoarcus evansii) protein is Benzoyl-CoA oxygenase component B (boxB).